The sequence spans 1075 residues: Atos homolog protein A (1075 aa).

Residues 24–32 form a transactivation domain 1 (TAD1) region; sequence ALLITEGRT. Disordered stretches follow at residues 430–469, 570–592, and 703–766; these read FGSPEFGSPGDSREGKVREKSETRPGETCTSHSLYPRQPA, YSPQEKPLKPEVRTQHQNHPDSI, and LNKN…PHSV. Residues 440 to 454 show a composition bias toward basic and acidic residues; sequence DSREGKVREKSETRP. The segment covering 703 to 712 has biased composition (polar residues); it reads LNKNKTNCSS. The span at 746-759 shows a compositional bias: basic and acidic residues; that stretch reads DRLKTEQEAKRDSG. Positions 878 to 935 are required for macropage invasion; sequence LLGNFEESVLNYRLDPLGIVDGFTAEVGASGTFCPTHLTLPVEVSFYSVSDDNAPSPY. Residues 962-970 form a transactivation domain 2 (TAD2) region; it reads FNPNKTVVK.

Belongs to the ATOS family.

The protein localises to the nucleus. Functionally, transcription regulator that syncronizes transcriptional and translational programs to promote macrophage invasion of tissues. This is Atos homolog protein A (Atosa) from Mus musculus (Mouse).